We begin with the raw amino-acid sequence, 542 residues long: Protein XP55 (542 aa).

Positions 1-33 (MTARRTRWTRRTDRSLPIRSAAAAVAFAAGATA) are cleaved as a signal peptide. A lipid anchor (N-palmitoyl cysteine) is attached at C34. Residue C34 is the site of S-diacylglycerol cysteine attachment. The interval 519-542 (LEGRTNTASPAGPGGTSRTGGRKK) is disordered.

Belongs to the bacterial solute-binding protein 5 family.

It localises to the cell membrane. Its function is as follows. Required for transport of an unidentified substrate. The chain is Protein XP55 (xp55) from Streptomyces lividans.